The sequence spans 671 residues: DNA ligase (671 aa).

NAD(+) is bound by residues 32–36 (DAEYD), 81–82 (SL), and Glu-113. Residue Lys-115 is the N6-AMP-lysine intermediate of the active site. The NAD(+) site is built by Arg-136, Glu-173, Lys-290, and Lys-314. 4 residues coordinate Zn(2+): Cys-408, Cys-411, Cys-426, and Cys-432. Positions 593–671 (EIDSPFAGKT…ETEMLRLLGS (79 aa)) constitute a BRCT domain.

Belongs to the NAD-dependent DNA ligase family. LigA subfamily. Mg(2+) is required as a cofactor. Mn(2+) serves as cofactor.

The catalysed reaction is NAD(+) + (deoxyribonucleotide)n-3'-hydroxyl + 5'-phospho-(deoxyribonucleotide)m = (deoxyribonucleotide)n+m + AMP + beta-nicotinamide D-nucleotide.. DNA ligase that catalyzes the formation of phosphodiester linkages between 5'-phosphoryl and 3'-hydroxyl groups in double-stranded DNA using NAD as a coenzyme and as the energy source for the reaction. It is essential for DNA replication and repair of damaged DNA. The chain is DNA ligase from Escherichia coli O81 (strain ED1a).